A 485-amino-acid polypeptide reads, in one-letter code: Poly(ADP-ribose) glycohydrolase 2 (485 aa).

Belongs to the poly(ADP-ribose) glycohydrolase family. Expressed in head and tail neurons.

Its subcellular location is the cytoplasm. It carries out the reaction [(1''-&gt;2')-ADP-alpha-D-ribose](n) + H2O = [(1''-&gt;2')-ADP-alpha-D-ribose](n-1) + ADP-D-ribose. In terms of biological role, poly(ADP-ribose) synthesized after DNA damage is only present transiently and is rapidly degraded by poly(ADP-ribose) glycohydrolase. Poly(ADP-ribose) metabolism may be required for maintenance of the normal function of neuronal cells. The chain is Poly(ADP-ribose) glycohydrolase 2 from Caenorhabditis elegans.